A 407-amino-acid chain; its full sequence is uncharacterized protein (407 aa).

Residues 145 to 231 are disordered; that stretch reads EANRFGRSNS…DPLTSITSDT (87 aa). Residues 158 to 175 are compositionally biased toward basic residues; that stretch reads SNSRSKSSRSRSNNRSKS. Residues 176-196 are compositionally biased toward low complexity; the sequence is SRSSSTQSKSNNRSNSRSNSK. Residues 271 to 407 enclose the N-acetyltransferase domain; the sequence is IVFETLDQND…NHKIHMEKDI (137 aa).

Its subcellular location is the virion. This is an uncharacterized protein from Acanthamoeba polyphaga (Amoeba).